We begin with the raw amino-acid sequence, 394 residues long: Elongation factor Tu 1 (394 aa).

The 195-residue stretch at 10-204 folds into the tr-type G domain; sequence KPHVNVGTIG…ALDSYIPEPE (195 aa). Residues 19-26 are G1; the sequence is GHVDHGKT. 19 to 26 is a binding site for GTP; sequence GHVDHGKT. A Mg(2+)-binding site is contributed by T26. The segment at 60-64 is G2; it reads GITIN. A G3 region spans residues 81–84; the sequence is DCPG. Residues 81–85 and 136–139 each bind GTP; these read DCPGH and NKCD. The tract at residues 136-139 is G4; that stretch reads NKCD. Residues 174–176 form a G5 region; sequence SAL.

The protein belongs to the TRAFAC class translation factor GTPase superfamily. Classic translation factor GTPase family. EF-Tu/EF-1A subfamily. As to quaternary structure, monomer.

The protein resides in the cytoplasm. The catalysed reaction is GTP + H2O = GDP + phosphate + H(+). GTP hydrolase that promotes the GTP-dependent binding of aminoacyl-tRNA to the A-site of ribosomes during protein biosynthesis. This chain is Elongation factor Tu 1, found in Shewanella sp. (strain MR-4).